The chain runs to 650 residues: Threonine--tRNA ligase (650 aa).

The region spanning 5–67 is the TGS domain; the sequence is NKSMFIKLKD…QEGDQVILWG (63 aa). The tract at residues 246-537 is catalytic; it reads DHKLLGAKLD…LIEHYVGKFP (292 aa). The Zn(2+) site is built by Cys-337, His-388, and His-514.

It belongs to the class-II aminoacyl-tRNA synthetase family. Homodimer. Requires Zn(2+) as cofactor.

It localises to the cytoplasm. The enzyme catalyses tRNA(Thr) + L-threonine + ATP = L-threonyl-tRNA(Thr) + AMP + diphosphate + H(+). Its function is as follows. Catalyzes the attachment of threonine to tRNA(Thr) in a two-step reaction: L-threonine is first activated by ATP to form Thr-AMP and then transferred to the acceptor end of tRNA(Thr). Also edits incorrectly charged L-seryl-tRNA(Thr). This is Threonine--tRNA ligase from Protochlamydia amoebophila (strain UWE25).